Consider the following 432-residue polypeptide: Ribulose bisphosphate carboxylase-like protein 2 (432 aa).

3 residues coordinate Mg(2+): Lys-198, Asp-200, and Glu-201. Position 198 is an N6-carboxylysine (Lys-198).

It belongs to the RuBisCO large chain family. Type IV subfamily. In terms of assembly, homodimer. It depends on Mg(2+) as a cofactor.

Functionally, may be involved in sulfur metabolism and oxidative stress response. Does not show RuBisCO activity. The sequence is that of Ribulose bisphosphate carboxylase-like protein 2 (rlp2) from Rhodopseudomonas palustris (strain ATCC BAA-98 / CGA009).